Here is a 275-residue protein sequence, read N- to C-terminus: NH(3)-dependent NAD(+) synthetase (275 aa).

46 to 53 (GISGGQDS) is a binding site for ATP. Aspartate 52 serves as a coordination point for Mg(2+). Arginine 140 is a binding site for deamido-NAD(+). Residue threonine 160 participates in ATP binding. Residue glutamate 165 coordinates Mg(2+). Residues lysine 173 and aspartate 180 each coordinate deamido-NAD(+). ATP-binding residues include lysine 189 and threonine 211. 260–261 (HK) is a deamido-NAD(+) binding site.

This sequence belongs to the NAD synthetase family. Homodimer.

It carries out the reaction deamido-NAD(+) + NH4(+) + ATP = AMP + diphosphate + NAD(+) + H(+). It functions in the pathway cofactor biosynthesis; NAD(+) biosynthesis; NAD(+) from deamido-NAD(+) (ammonia route): step 1/1. Its function is as follows. Catalyzes the ATP-dependent amidation of deamido-NAD to form NAD. Uses ammonia as a nitrogen source. The protein is NH(3)-dependent NAD(+) synthetase of Escherichia coli O157:H7.